Here is a 356-residue protein sequence, read N- to C-terminus: 5-formaminoimidazole-4-carboxamide-1-(beta)-D-ribofuranosyl 5'-monophosphate synthetase 1 (356 aa).

5-amino-1-(5-phospho-beta-D-ribosyl)imidazole-4-carboxamide-binding residues include histidine 27 and serine 94. An ATP-grasp domain is found at 101–333; the sequence is TENFAEMAVP…YADLIQEDLS (233 aa). ATP contacts are provided by residues 145–196 and glutamate 226; that span reads PRDI…TRYY. Asparagine 255 contacts 5-amino-1-(5-phospho-beta-D-ribosyl)imidazole-4-carboxamide. Mg(2+) contacts are provided by glutamate 293 and glutamate 306.

It belongs to the phosphohexose mutase family. The cofactor is Mg(2+). Requires Mn(2+) as cofactor.

It catalyses the reaction 5-amino-1-(5-phospho-beta-D-ribosyl)imidazole-4-carboxamide + formate + ATP = 5-formamido-1-(5-phospho-D-ribosyl)imidazole-4-carboxamide + ADP + phosphate. It functions in the pathway purine metabolism; IMP biosynthesis via de novo pathway; 5-formamido-1-(5-phospho-D-ribosyl)imidazole-4-carboxamide from 5-amino-1-(5-phospho-D-ribosyl)imidazole-4-carboxamide (formate route): step 1/1. Functionally, catalyzes the ATP- and formate-dependent formylation of 5-aminoimidazole-4-carboxamide-1-beta-d-ribofuranosyl 5'-monophosphate (AICAR) to 5-formaminoimidazole-4-carboxamide-1-beta-d-ribofuranosyl 5'-monophosphate (FAICAR) in the absence of folates. The chain is 5-formaminoimidazole-4-carboxamide-1-(beta)-D-ribofuranosyl 5'-monophosphate synthetase 1 from Methanosarcina mazei (strain ATCC BAA-159 / DSM 3647 / Goe1 / Go1 / JCM 11833 / OCM 88) (Methanosarcina frisia).